A 139-amino-acid polypeptide reads, in one-letter code: Natriuretic peptide Mc-NP (139 aa).

The first 25 residues, 1–25 (MVGLSRLRGGGLLLVLALLPLALDG), serve as a signal peptide directing secretion. Positions 26-75 (KPLEEAPTAPSRIIPFSRPVRKQSQAVLDPMVHPERPAGSGDDGDSRRLE) are excised as a propeptide. Positions 45 to 72 (VRKQSQAVLDPMVHPERPAGSGDDGDSR) are disordered. A disulfide bridge connects residues C86 and C102. Positions 117 to 139 (IIPFSRPVRKESRAALDRMQQPG) are excised as a propeptide.

It belongs to the natriuretic peptide family. As to expression, expressed by the venom gland.

It localises to the secreted. Snake venom natriuretic peptide that dose-dependently induces the rapid relaxation of rat aortic strips phenylephrine-precontracted. Acts by stimulating cGMP production in a dose-dependent manner (by probably activating NPR1 and/or NPR2). May also show potent hypotensive effects. A synthetic peptide (AA 77-108, where the Cys-95 is replaced by a Ser) increases sodium excretion and urinary volume in rat kidneys. This Micrurus corallinus (Brazilian coral snake) protein is Natriuretic peptide Mc-NP.